Consider the following 683-residue polypeptide: DNA-directed RNA polymerase subunit beta' (683 aa).

Zn(2+)-binding residues include Cys-69, Cys-71, Cys-87, and Cys-90. Asp-492, Asp-494, and Asp-496 together coordinate Mg(2+).

The protein belongs to the RNA polymerase beta' chain family. RpoC1 subfamily. As to quaternary structure, in plastids the minimal PEP RNA polymerase catalytic core is composed of four subunits: alpha, beta, beta', and beta''. When a (nuclear-encoded) sigma factor is associated with the core the holoenzyme is formed, which can initiate transcription. Requires Mg(2+) as cofactor. Zn(2+) is required as a cofactor.

The protein localises to the plastid. It localises to the chloroplast. The enzyme catalyses RNA(n) + a ribonucleoside 5'-triphosphate = RNA(n+1) + diphosphate. Its function is as follows. DNA-dependent RNA polymerase catalyzes the transcription of DNA into RNA using the four ribonucleoside triphosphates as substrates. This Coffea arabica (Arabian coffee) protein is DNA-directed RNA polymerase subunit beta'.